The chain runs to 129 residues: Small ribosomal subunit protein uS11c (129 aa).

This sequence belongs to the universal ribosomal protein uS11 family. Part of the 30S ribosomal subunit.

It is found in the plastid. The protein resides in the chloroplast. The polypeptide is Small ribosomal subunit protein uS11c (Cyanidium caldarium (Red alga)).